The primary structure comprises 224 residues: Adenylate kinase (224 aa).

Residue 10–15 (GSGKGT) participates in ATP binding. The segment at 30–59 (ESGAIFRDNIKGGTDLGMKAKAYIDKGDLV) is NMP. AMP is bound by residues Ser31, Arg36, 57 to 59 (DLV), 85 to 88 (GFPR), and Gln92. Positions 126-165 (GRRLCENDNNHPNNIFIDAIKPNGDKCRVCGGALSSRADD) are LID. Residue Arg127 participates in ATP binding. AMP contacts are provided by Arg162 and Arg174. Asn211 provides a ligand contact to ATP.

This sequence belongs to the adenylate kinase family. Monomer.

Its subcellular location is the cytoplasm. It carries out the reaction AMP + ATP = 2 ADP. The protein operates within purine metabolism; AMP biosynthesis via salvage pathway; AMP from ADP: step 1/1. Functionally, catalyzes the reversible transfer of the terminal phosphate group between ATP and AMP. Plays an important role in cellular energy homeostasis and in adenine nucleotide metabolism. This is Adenylate kinase from Desulforapulum autotrophicum (strain ATCC 43914 / DSM 3382 / VKM B-1955 / HRM2) (Desulfobacterium autotrophicum).